Here is a 323-residue protein sequence, read N- to C-terminus: CYFIP-related Rac1 interactor A (323 aa).

It belongs to the CYRI family. As to quaternary structure, interacts with RAC1 (GTP-bound form preferentially).

Its subcellular location is the membrane. In terms of biological role, may negatively regulate RAC1 signaling and RAC1-driven cytoskeletal remodeling. May regulate chemotaxis, cell migration and epithelial polarization by controlling the polarity, plasticity, duration and extent of protrusions. In Bos taurus (Bovine), this protein is CYFIP-related Rac1 interactor A (CYRIA).